A 366-amino-acid chain; its full sequence is MLIWLVELSEYFKFLNLFRYITFRTGAALFTSALIVFLFGPTIINSLRIRQGKGQPIRADGPQTHFKKAGTPTMGGLMILAGIVGASLLWADLSNVYVVATLLVTLGFGAIGFYDDYLKVTKQSHMGFSGKARLGIEFVIAGIAVYFMMRTALASGVAGSTFGSSIAFPFFKDFMINIGIMFVVFGGFVIVGAGNAVNLTDGLDGLAIVPVMIAAASFGVIAYLAGNVVFANYLQINFVPGTGELAVVLGAVIGAGLGFLWFNAPPAAIFMGDTGSLALGGTIGTVAVATKHEIVMAIIGGLFVMETLSVIIQVGFFKMTGRRVFLMAPIHHHFEKKGWTESQVVIRFWIIAVGLAMLGLSTLKLR.

10 consecutive transmembrane segments (helical) span residues 27 to 47, 71 to 91, 93 to 113, 134 to 154, 174 to 194, 205 to 225, 245 to 265, 268 to 288, 294 to 314, and 343 to 363; these read AALF…INSL, TPTM…LLWA, LSNV…AIGF, LGIE…TALA, FMIN…VGAG, GLAI…AYLA, LAVV…FNAP, AIFM…TVAV, IVMA…IIQV, and QVVI…LSTL.

The protein belongs to the glycosyltransferase 4 family. MraY subfamily. Mg(2+) serves as cofactor.

It is found in the cell inner membrane. The catalysed reaction is UDP-N-acetyl-alpha-D-muramoyl-L-alanyl-gamma-D-glutamyl-meso-2,6-diaminopimeloyl-D-alanyl-D-alanine + di-trans,octa-cis-undecaprenyl phosphate = di-trans,octa-cis-undecaprenyl diphospho-N-acetyl-alpha-D-muramoyl-L-alanyl-D-glutamyl-meso-2,6-diaminopimeloyl-D-alanyl-D-alanine + UMP. Its pathway is cell wall biogenesis; peptidoglycan biosynthesis. Catalyzes the initial step of the lipid cycle reactions in the biosynthesis of the cell wall peptidoglycan: transfers peptidoglycan precursor phospho-MurNAc-pentapeptide from UDP-MurNAc-pentapeptide onto the lipid carrier undecaprenyl phosphate, yielding undecaprenyl-pyrophosphoryl-MurNAc-pentapeptide, known as lipid I. The sequence is that of Phospho-N-acetylmuramoyl-pentapeptide-transferase from Rhizobium leguminosarum bv. trifolii (strain WSM2304).